A 401-amino-acid chain; its full sequence is Chalcone synthase 6 (401 aa).

C168 is a catalytic residue.

The protein belongs to the thiolase-like superfamily. Chalcone/stilbene synthases family.

It carries out the reaction (E)-4-coumaroyl-CoA + 3 malonyl-CoA + 3 H(+) = 2',4,4',6'-tetrahydroxychalcone + 3 CO2 + 4 CoA. It participates in secondary metabolite biosynthesis; flavonoid biosynthesis. In terms of biological role, the primary product of this enzyme is 4,2',4',6'-tetrahydroxychalcone (also termed naringenin-chalcone or chalcone) which can under specific conditions spontaneously isomerize into naringenin. This is Chalcone synthase 6 (CHS6) from Sorghum bicolor (Sorghum).